Here is a 771-residue protein sequence, read N- to C-terminus: Probable exo-1,4-beta-xylosidase xlnD (771 aa).

The first 25 residues, 1 to 25, serve as a signal peptide directing secretion; it reads MARIMSWHYGKAITLFVCLGPVALS. Residue asparagine 67 is glycosylated (N-linked (GlcNAc...) asparagine). Aspartate 293 is a catalytic residue. N-linked (GlcNAc...) asparagine glycans are attached at residues asparagine 305, asparagine 345, asparagine 423, and asparagine 464.

The protein belongs to the glycosyl hydrolase 3 family.

The protein localises to the secreted. It catalyses the reaction Hydrolysis of (1-&gt;4)-beta-D-xylans, to remove successive D-xylose residues from the non-reducing termini.. Its pathway is glycan degradation; xylan degradation. Functionally, xylan 1,4-beta-xylosidase involved in the hydrolysis of xylan, a major structural heterogeneous polysaccharide found in plant biomass representing the second most abundant polysaccharide in the biosphere, after cellulose. The protein is Probable exo-1,4-beta-xylosidase xlnD (xlnD) of Neosartorya fischeri (strain ATCC 1020 / DSM 3700 / CBS 544.65 / FGSC A1164 / JCM 1740 / NRRL 181 / WB 181) (Aspergillus fischerianus).